A 261-amino-acid polypeptide reads, in one-letter code: MIETYSQPSPRSVAAGPPVSMKIFMYLLTVFLITQMIGSALFAAYLHRRLDKIEDERNLHEDFVFIKTIQRCKQGEGSLSLLNCEEIRSQFEDLVKGIMQSKEVKKKEKSFEMHKGDQDPQIAAHVISEASSKTASVLQWAPKGYYTLSTNLVTLENGRQLAVKRQGIYYIYAQVTFCSNRDAAGQAPFIASLCLRSPSGSERILLRAANTHSSSKPCGQQSIHLGGVFELQPGASVFVNVTDPSQVSHGTGFTSFGLLKL.

Residues 1 to 22 (MIETYSQPSPRSVAAGPPVSMK) are Cytoplasmic-facing. The chain crosses the membrane as a helical; Signal-anchor for type II membrane protein span at residues 23 to 43 (IFMYLLTVFLITQMIGSALFA). The Extracellular segment spans residues 44–240 (AYLHRRLDKI…LQPGASVFVN (197 aa)). The 140-residue stretch at 122 to 261 (IAAHVISEAS…GFTSFGLLKL (140 aa)) folds into the THD domain. Cysteines 178 and 218 form a disulfide. Asn240 is a glycosylation site (N-linked (GlcNAc...) asparagine).

This sequence belongs to the tumor necrosis factor family. As to quaternary structure, homotrimer. Interacts with CD28. CD40 ligand, soluble form: Exists as either a monomer or a homotrimer. Forms a ternary complex between CD40 and integrins for CD40-CD40LG signaling. The soluble form derives from the membrane form by proteolytic processing.

The protein localises to the cell membrane. Its subcellular location is the cell surface. It localises to the secreted. Its function is as follows. Cytokine that acts as a ligand to CD40/TNFRSF5. Costimulates T-cell proliferation and cytokine production. Its cross-linking on T-cells generates a costimulatory signal which enhances the production of IL4 and IL10 in conjunction with the TCR/CD3 ligation and CD28 costimulation. Induces the activation of NF-kappa-B. Induces the activation of kinases MAPK8 and PAK2 in T-cells. Mediates B-cell proliferation in the absence of co-stimulus as well as IgE production in the presence of IL4. Involved in immunoglobulin class switching. Functionally, acts as a ligand for integrins, specifically ITGA5:ITGB1 and ITGAV:ITGB3; both integrins and the CD40 receptor are required for activation of CD40-CD40LG signaling, which have cell-type dependent effects, such as B-cell activation, NF-kappa-B signaling and anti-apoptotic signaling. The polypeptide is CD40 ligand (CD40LG) (Sus scrofa (Pig)).